A 203-amino-acid polypeptide reads, in one-letter code: Thymidine kinase (203 aa).

ATP-binding positions include 21-28 and 99-102; these read GCMFAGKT and DEIQ. Residue E100 is the Proton acceptor of the active site. Zn(2+) contacts are provided by C156, C159, C194, and C197.

It belongs to the thymidine kinase family. As to quaternary structure, homotetramer.

The protein resides in the cytoplasm. It carries out the reaction thymidine + ATP = dTMP + ADP + H(+). This chain is Thymidine kinase, found in Mesoplasma florum (strain ATCC 33453 / NBRC 100688 / NCTC 11704 / L1) (Acholeplasma florum).